The sequence spans 87 residues: U3-theraphotoxin-Hhn1p (87 aa).

The signal sequence occupies residues Met1–Ala24. Positions Ser25 to Arg52 are excised as a propeptide. Disulfide bonds link Cys54–Cys67, Cys61–Cys72, and Cys66–Cys79.

The protein belongs to the neurotoxin 10 (Hwtx-1) family. 51 (Hntx-8) subfamily. Hntx-8 sub-subfamily. In terms of tissue distribution, expressed by the venom gland.

It is found in the secreted. Ion channel inhibitor. This Cyriopagopus hainanus (Chinese bird spider) protein is U3-theraphotoxin-Hhn1p.